The following is a 291-amino-acid chain: Bifunctional protein FolD (291 aa).

Residues 171–173 (GVS) and isoleucine 239 each bind NADP(+).

This sequence belongs to the tetrahydrofolate dehydrogenase/cyclohydrolase family. As to quaternary structure, homodimer.

It catalyses the reaction (6R)-5,10-methylene-5,6,7,8-tetrahydrofolate + NADP(+) = (6R)-5,10-methenyltetrahydrofolate + NADPH. The enzyme catalyses (6R)-5,10-methenyltetrahydrofolate + H2O = (6R)-10-formyltetrahydrofolate + H(+). It functions in the pathway one-carbon metabolism; tetrahydrofolate interconversion. In terms of biological role, catalyzes the oxidation of 5,10-methylenetetrahydrofolate to 5,10-methenyltetrahydrofolate and then the hydrolysis of 5,10-methenyltetrahydrofolate to 10-formyltetrahydrofolate. The polypeptide is Bifunctional protein FolD (Xylella fastidiosa (strain Temecula1 / ATCC 700964)).